A 572-amino-acid polypeptide reads, in one-letter code: 2-succinyl-5-enolpyruvyl-6-hydroxy-3-cyclohexene-1-carboxylate synthase (572 aa).

It belongs to the TPP enzyme family. MenD subfamily. As to quaternary structure, homodimer. It depends on Mg(2+) as a cofactor. Mn(2+) is required as a cofactor. Thiamine diphosphate serves as cofactor.

It catalyses the reaction isochorismate + 2-oxoglutarate + H(+) = 5-enolpyruvoyl-6-hydroxy-2-succinyl-cyclohex-3-ene-1-carboxylate + CO2. The protein operates within quinol/quinone metabolism; 1,4-dihydroxy-2-naphthoate biosynthesis; 1,4-dihydroxy-2-naphthoate from chorismate: step 2/7. It functions in the pathway quinol/quinone metabolism; menaquinone biosynthesis. In terms of biological role, catalyzes the thiamine diphosphate-dependent decarboxylation of 2-oxoglutarate and the subsequent addition of the resulting succinic semialdehyde-thiamine pyrophosphate anion to isochorismate to yield 2-succinyl-5-enolpyruvyl-6-hydroxy-3-cyclohexene-1-carboxylate (SEPHCHC). This Aeromonas salmonicida (strain A449) protein is 2-succinyl-5-enolpyruvyl-6-hydroxy-3-cyclohexene-1-carboxylate synthase.